An 82-amino-acid polypeptide reads, in one-letter code: MGGISIWQLLIIAVIIVLLFGTKKLRGVGSDLGSAVKGFKKAISEDEPAKEAKKDADFVPQNLEKKEAETVEKQKQNDKEQA.

A helical transmembrane segment spans residues 1 to 21 (MGGISIWQLLIIAVIIVLLFG). The disordered stretch occupies residues 48 to 82 (PAKEAKKDADFVPQNLEKKEAETVEKQKQNDKEQA).

Belongs to the TatA/E family. The Tat system comprises two distinct complexes: a TatABC complex, containing multiple copies of TatA, TatB and TatC subunits, and a separate TatA complex, containing only TatA subunits. Substrates initially bind to the TatABC complex, which probably triggers association of the separate TatA complex to form the active translocon.

Its subcellular location is the cell inner membrane. Functionally, part of the twin-arginine translocation (Tat) system that transports large folded proteins containing a characteristic twin-arginine motif in their signal peptide across membranes. TatA could form the protein-conducting channel of the Tat system. This chain is Sec-independent protein translocase protein TatA, found in Aliivibrio fischeri (strain ATCC 700601 / ES114) (Vibrio fischeri).